The chain runs to 562 residues: NAD-dependent malic enzyme (562 aa).

Catalysis depends on Tyr-101, which acts as the Proton donor. An NAD(+)-binding site is contributed by Arg-154. The active-site Proton acceptor is the Lys-172. 3 residues coordinate a divalent metal cation: Glu-243, Asp-244, and Asp-267. NAD(+) is bound by residues Asp-267 and Asn-415.

Belongs to the malic enzymes family. In terms of assembly, homotetramer. The cofactor is Mg(2+). It depends on Mn(2+) as a cofactor.

The enzyme catalyses (S)-malate + NAD(+) = pyruvate + CO2 + NADH. It carries out the reaction oxaloacetate + H(+) = pyruvate + CO2. The chain is NAD-dependent malic enzyme from Shewanella sediminis (strain HAW-EB3).